The sequence spans 143 residues: Hemoglobin cathodic subunit alpha (143 aa).

S2 is subject to N-acetylserine. Residues 2–143 enclose the Globin domain; the sequence is SLTAKDKTLV…VSAALADKYR (142 aa). H59 lines the O2 pocket. Position 89 (H89) interacts with heme b.

This sequence belongs to the globin family. Heterotetramer of two alpha chains and two beta chains. As to expression, red blood cells.

Its function is as follows. Involved in oxygen transport from the gills to the various peripheral tissues. The polypeptide is Hemoglobin cathodic subunit alpha (Conger conger (Conger eel)).